Reading from the N-terminus, the 180-residue chain is Probable chorismate pyruvate-lyase (180 aa).

Residues Arg76, Leu113, and Glu171 each coordinate substrate.

Belongs to the UbiC family.

It localises to the cytoplasm. The enzyme catalyses chorismate = 4-hydroxybenzoate + pyruvate. It participates in cofactor biosynthesis; ubiquinone biosynthesis. In terms of biological role, removes the pyruvyl group from chorismate, with concomitant aromatization of the ring, to provide 4-hydroxybenzoate (4HB) for the ubiquinone pathway. The sequence is that of Probable chorismate pyruvate-lyase from Pseudoalteromonas translucida (strain TAC 125).